A 120-amino-acid polypeptide reads, in one-letter code: uncharacterized protein (120 aa).

This is an uncharacterized protein from Saccharomyces cerevisiae (strain ATCC 204508 / S288c) (Baker's yeast).